Consider the following 563-residue polypeptide: Chaperonin GroEL 1 (563 aa).

ATP contacts are provided by residues 29-32, 86-90, Gly-413, and Asp-492; these read TIGP and DGTTT. The tract at residues 520–541 is disordered; it reads DKPEPPSAPGAEGGDPMGGMGG. Over residues 530–541 the composition is skewed to gly residues; it reads AEGGDPMGGMGG.

It belongs to the chaperonin (HSP60) family. In terms of assembly, forms a cylinder of 14 subunits composed of two heptameric rings stacked back-to-back. Interacts with the co-chaperonin GroES.

The protein resides in the cytoplasm. It catalyses the reaction ATP + H2O + a folded polypeptide = ADP + phosphate + an unfolded polypeptide.. Its function is as follows. Together with its co-chaperonin GroES, plays an essential role in assisting protein folding. The GroEL-GroES system forms a nano-cage that allows encapsulation of the non-native substrate proteins and provides a physical environment optimized to promote and accelerate protein folding. The chain is Chaperonin GroEL 1 from Prochlorococcus marinus (strain NATL1A).